The sequence spans 406 residues: Homocitrate synthase AksA (406 aa).

In terms of domain architecture, Pyruvate carboxyltransferase spans 32–285; sequence IYIYDTTLRD…DLGLNLEVLP (254 aa).

Belongs to the alpha-IPM synthase/homocitrate synthase family.

It catalyses the reaction acetyl-CoA + 2-oxoglutarate + H2O = (2R)-homocitrate + CoA + H(+). The enzyme catalyses 2-oxoadipate + acetyl-CoA + H2O = (R)-dihomocitrate + CoA + H(+). It carries out the reaction 2-oxoheptanedioate + acetyl-CoA + H2O = (R)-trihomocitrate + CoA + H(+). It functions in the pathway organic acid metabolism; 2-oxosuberate biosynthesis. In terms of biological role, catalyzes the condensation of alpha-ketoglutarate and acetyl-CoA to form (R)-homocitrate. Can also catalyze the condensation of alpha-ketoadipate with acetyl-CoA to form (R)-homo(2)citrate, and the condensation of alpha-ketopimelate with acetyl-CoA to form (R)-homo(3)citrate. These reactions are part of the biosynthesis pathway of coenzyme B and biotin. The protein is Homocitrate synthase AksA (aksA) of Methanocaldococcus jannaschii (strain ATCC 43067 / DSM 2661 / JAL-1 / JCM 10045 / NBRC 100440) (Methanococcus jannaschii).